A 134-amino-acid polypeptide reads, in one-letter code: Glycine cleavage system H protein (134 aa).

In terms of domain architecture, Lipoyl-binding spans 24–106; the sequence is TVRVGITDYA…YGAGWLLDIQ (83 aa). An N6-lipoyllysine modification is found at Lys65.

This sequence belongs to the GcvH family. In terms of assembly, the glycine cleavage system is composed of four proteins: P, T, L and H. Requires (R)-lipoate as cofactor.

Its function is as follows. The glycine cleavage system catalyzes the degradation of glycine. The H protein shuttles the methylamine group of glycine from the P protein to the T protein. The chain is Glycine cleavage system H protein from Mycobacterium bovis (strain ATCC BAA-935 / AF2122/97).